The sequence spans 159 residues: Small ribosomal subunit protein uS17x (159 aa).

This sequence belongs to the universal ribosomal protein uS17 family.

Its subcellular location is the cytoplasm. This chain is Small ribosomal subunit protein uS17x (RPS11C), found in Arabidopsis thaliana (Mouse-ear cress).